Reading from the N-terminus, the 256-residue chain is Calsenilin (256 aa).

Residues methionine 1–glycine 20 are disordered. Position 14 is a phosphoserine (serine 14). Lysine 26 participates in a covalent cross-link: Glycyl lysine isopeptide (Lys-Gly) (interchain with G-Cter in SUMO1). Residues cysteine 45 and cysteine 46 are each lipidated (S-palmitoyl cysteine). Serine 60 carries the phosphoserine modification. Serine 63 carries the post-translational modification Phosphoserine; by CK1. The EF-hand 1; degenerate domain maps to leucine 67 to proline 123. Residue lysine 90 forms a Glycyl lysine isopeptide (Lys-Gly) (interchain with G-Cter in SUMO1) linkage. 3 EF-hand domains span residues aspartate 126 to glycine 161, threonine 162 to methionine 197, and alanine 210 to isoleucine 245. Ca(2+) is bound by residues aspartate 175, asparagine 177, aspartate 179, tyrosine 181, glutamate 186, aspartate 223, asparagine 225, aspartate 227, and glutamate 234. The interaction with KCND2 stretch occupies residues glutamate 243–isoleucine 256.

The protein belongs to the recoverin family. Binds to DNA as a homomultimer. Dimerization is induced by binding to calcium. Interacts with the C-terminus of PSEN1 and PSEN2 and with PSEN2 CTF subunit. Associates with KCN1. Component of heteromultimeric potassium channels. Identified in potassium channel complexes containing KCND1, KCND2, KCND3, KCNIP1, KCNIP2, KCNIP3, KCNIP4, DPP6 and DPP10. Interacts with KCND2 and KCND3. In terms of processing, palmitoylated. Palmitoylation enhances association with the plasma membrane. Post-translationally, proteolytically cleaved by caspase-3. Phosphorylation at Ser-63 inhibits cleavage by CASP3. Highly expressed in brain. Widely expressed at lower levels. Expression levels are elevated in brain cortex regions affected by Alzheimer disease.

It localises to the cytoplasm. The protein localises to the cell membrane. It is found in the endoplasmic reticulum. The protein resides in the golgi apparatus. Its subcellular location is the nucleus. In terms of biological role, calcium-dependent transcriptional repressor that binds to the DRE element of genes including PDYN and FOS. Affinity for DNA is reduced upon binding to calcium and enhanced by binding to magnesium. Seems to be involved in nociception. Regulatory subunit of Kv4/D (Shal)-type voltage-gated rapidly inactivating A-type potassium channels, such as KCND2/Kv4.2 and KCND3/Kv4.3. Modulates channel expression at the cell membrane, gating characteristics, inactivation kinetics and rate of recovery from inactivation in a calcium-dependent and isoform-specific manner. Functionally, may play a role in the regulation of PSEN2 proteolytic processing and apoptosis. Together with PSEN2 involved in modulation of amyloid-beta formation. In Homo sapiens (Human), this protein is Calsenilin (KCNIP3).